A 192-amino-acid chain; its full sequence is Ion-translocating oxidoreductase complex subunit A (192 aa).

Helical transmembrane passes span 5–25, 39–59, 65–85, 102–122, 134–154, and 171–191; these read LLLL…FLGL, IGMS…SYLV, LPFD…AVVV, ALGI…VALL, AIYG…FSAM, and AIAM…TGLV.

Belongs to the NqrDE/RnfAE family. The complex is composed of six subunits: RnfA, RnfB, RnfC, RnfD, RnfE and RnfG.

It localises to the cell inner membrane. Part of a membrane-bound complex that couples electron transfer with translocation of ions across the membrane. The polypeptide is Ion-translocating oxidoreductase complex subunit A (Shewanella sp. (strain MR-4)).